Consider the following 217-residue polypeptide: NADPH-dependent 3-demethoxyubiquinone 3-hydroxylase, mitochondrial (217 aa).

The N-terminal 23 residues, 1 to 23 (MSAAGAIAAASVGRLRTGVRRPF), are a transit peptide targeting the mitochondrion. 2 tandem repeats follow at residues 48-129 (AVDR…TALL) and 130-217 (GKEG…SERF). The segment at 48 to 217 (AVDRIIRVDH…SAAIYLSERF (170 aa)) is 2 X approximate tandem repeats. R51 contacts NADH. Residues E60, E90, H93, E142, E178, and H181 each coordinate Fe cation. NADH is bound by residues Y212 and R216.

This sequence belongs to the COQ7 family. Component of a multi-subunit COQ enzyme complex. Interacts with COQ8B and COQ6. Interacts with COQ9. Fe cation is required as a cofactor. In terms of tissue distribution, highly expressed in tissues with high energy demand such as heart, muscle, liver, and kidney.

The protein localises to the mitochondrion inner membrane. The catalysed reaction is a 5-methoxy-2-methyl-3-(all-trans-polyprenyl)benzoquinone + NADH + O2 = a 3-demethylubiquinone + NAD(+) + H2O. Its pathway is cofactor biosynthesis; ubiquinone biosynthesis. In terms of biological role, catalyzes the hydroxylation of the 5-methoxy-2-methyl-3-(all-trans-polyprenyl)benzoquinone at the C6 position and participates in the biosynthesis of ubiquinone. Catalyzes the reaction through a substrate-mediated reduction pathway, whereby NADH shuttles electrons to 5-methoxy-2-methyl-3-(all-trans-decaprenyl)benzoquinone, which then transfers the electrons to the two Fe(3+) centers. The binding of 5-methoxy-2-methyl-3-(all-trans-polyprenyl)benzoquinone (DMQn) mediates reduction of the diiron center by nicotinamide adenine dinucleotide (NADH) and initiates oxygen activation for subsequent DMQ hydroxylation. The physiological substrates are 5-methoxy-2-methyl-3-(all-trans-nonaprenyl)benzoquinone (DMQ(9)) and 5-methoxy-2-methyl-3-(all-trans-decaprenyl)benzoquinone (DMQ(10)), however in vitro the enzyme does not have any specificity concerning the length of the polyprenyl tail, and accepts tails of various lengths with similar efficiency. Also has a structural role in the COQ enzyme complex, stabilizing other COQ polypeptides. Involved in lifespan determination in a ubiquinone-independent manner. Plays a role in modulating mitochondrial stress responses, acting in the nucleus, perhaps via regulating gene expression, independent of its characterized mitochondrial function in ubiquinone biosynthesis. The sequence is that of NADPH-dependent 3-demethoxyubiquinone 3-hydroxylase, mitochondrial from Mus musculus (Mouse).